A 282-amino-acid polypeptide reads, in one-letter code: 2-dehydro-3-deoxyphosphooctonate aldolase (282 aa).

The protein belongs to the KdsA family.

The protein resides in the cytoplasm. The catalysed reaction is D-arabinose 5-phosphate + phosphoenolpyruvate + H2O = 3-deoxy-alpha-D-manno-2-octulosonate-8-phosphate + phosphate. It functions in the pathway carbohydrate biosynthesis; 3-deoxy-D-manno-octulosonate biosynthesis; 3-deoxy-D-manno-octulosonate from D-ribulose 5-phosphate: step 2/3. The protein operates within bacterial outer membrane biogenesis; lipopolysaccharide biosynthesis. This Shewanella baltica (strain OS185) protein is 2-dehydro-3-deoxyphosphooctonate aldolase.